A 175-amino-acid chain; its full sequence is Co-chaperone protein HscB homolog (175 aa).

A J domain is found at 7-79 (SHFALFNLPE…LKRARYLLSL (73 aa)).

It belongs to the HscB family. In terms of assembly, interacts with HscA and stimulates its ATPase activity.

Its function is as follows. Co-chaperone involved in the maturation of iron-sulfur cluster-containing proteins. Seems to help targeting proteins to be folded toward HscA. This is Co-chaperone protein HscB homolog from Paraburkholderia phymatum (strain DSM 17167 / CIP 108236 / LMG 21445 / STM815) (Burkholderia phymatum).